Here is a 61-residue protein sequence, read N- to C-terminus: Metallothionein-2 (61 aa).

Met-1 is modified (N-acetylmethionine). The interval 1 to 29 is beta; it reads MDPNCSCVAGDSCTCAGSCKCKECKCTSC. A divalent metal cation is bound by residues Cys-5, Cys-7, Cys-13, Cys-15, Cys-19, Cys-21, Cys-24, Cys-26, Cys-29, Cys-33, Cys-34, Cys-36, Cys-37, Cys-41, Cys-44, Cys-48, Cys-50, Cys-57, Cys-59, and Cys-60. The interval 20–25 is antigenic epitope; it reads KCKECK. The tract at residues 30–61 is alpha; the sequence is KKSCCSCCPVGCAKCAQGCICKGASDKCNCCA.

The protein belongs to the metallothionein superfamily. Type 1 family.

Functionally, metallothioneins have a high content of cysteine residues that bind various heavy metals; these proteins are transcriptionally regulated by both heavy metals and glucocorticoids. This Macaca fascicularis (Crab-eating macaque) protein is Metallothionein-2 (MT2).